Here is a 385-residue protein sequence, read N- to C-terminus: Protein-glutamate methylesterase/protein-glutamine glutaminase (385 aa).

A 4-aspartylphosphate modification is found at aspartate 53. Residues 196-385 form the CheB-type methylesterase domain; the sequence is KHKTGKIIVV…EIADHVLRRS (190 aa). Catalysis depends on residues serine 208, histidine 234, and aspartate 330.

Belongs to the CheB family. In terms of processing, phosphorylated by CheA. Phosphorylation of the N-terminal regulatory domain activates the methylesterase activity.

The protein localises to the cytoplasm. The catalysed reaction is [protein]-L-glutamate 5-O-methyl ester + H2O = L-glutamyl-[protein] + methanol + H(+). The enzyme catalyses L-glutaminyl-[protein] + H2O = L-glutamyl-[protein] + NH4(+). In terms of biological role, involved in chemotaxis. Part of a chemotaxis signal transduction system that modulates chemotaxis in response to various stimuli. Catalyzes the demethylation of specific methylglutamate residues introduced into the chemoreceptors (methyl-accepting chemotaxis proteins or MCP) by CheR. Also mediates the irreversible deamidation of specific glutamine residues to glutamic acid. In Borreliella burgdorferi (strain ATCC 35210 / DSM 4680 / CIP 102532 / B31) (Borrelia burgdorferi), this protein is Protein-glutamate methylesterase/protein-glutamine glutaminase.